A 435-amino-acid chain; its full sequence is 3-phosphoshikimate 1-carboxyvinyltransferase (435 aa).

Residues Lys-23, Ser-24, and Arg-28 each coordinate 3-phosphoshikimate. Lys-23 is a binding site for phosphoenolpyruvate. 2 residues coordinate phosphoenolpyruvate: Gly-97 and Arg-125. Residues Ser-170, Ser-171, Gln-172, Ser-198, Asp-314, Asn-338, and Lys-342 each coordinate 3-phosphoshikimate. Phosphoenolpyruvate is bound at residue Gln-172. The Proton acceptor role is filled by Asp-314. Arg-346, Arg-388, and Lys-413 together coordinate phosphoenolpyruvate.

This sequence belongs to the EPSP synthase family. In terms of assembly, monomer.

Its subcellular location is the cytoplasm. The catalysed reaction is 3-phosphoshikimate + phosphoenolpyruvate = 5-O-(1-carboxyvinyl)-3-phosphoshikimate + phosphate. It functions in the pathway metabolic intermediate biosynthesis; chorismate biosynthesis; chorismate from D-erythrose 4-phosphate and phosphoenolpyruvate: step 6/7. Catalyzes the transfer of the enolpyruvyl moiety of phosphoenolpyruvate (PEP) to the 5-hydroxyl of shikimate-3-phosphate (S3P) to produce enolpyruvyl shikimate-3-phosphate and inorganic phosphate. This Sodalis glossinidius (strain morsitans) protein is 3-phosphoshikimate 1-carboxyvinyltransferase.